A 316-amino-acid polypeptide reads, in one-letter code: Glutathione synthetase (316 aa).

In terms of domain architecture, ATP-grasp spans 125-310; it reads KLFTAWFSDL…ITGMLMDAIE (186 aa). An N-beta-linked (GlcNAc) arginine glycan is attached at Arg256. Residues Glu281 and Asn283 each coordinate Mg(2+).

Belongs to the prokaryotic GSH synthase family. It depends on Mg(2+) as a cofactor. The cofactor is Mn(2+).

The catalysed reaction is gamma-L-glutamyl-L-cysteine + glycine + ATP = glutathione + ADP + phosphate + H(+). It participates in sulfur metabolism; glutathione biosynthesis; glutathione from L-cysteine and L-glutamate: step 2/2. This chain is Glutathione synthetase, found in Escherichia coli O127:H6 (strain E2348/69 / EPEC).